A 202-amino-acid polypeptide reads, in one-letter code: Snake venom metalloproteinase atroxlysin-1 (202 aa).

The Peptidase M12B domain occupies 6–202 (RYVDLFIVVD…ENPQCILNKR (197 aa)). Asp-9 and Asp-93 together coordinate Ca(2+). Disulfide bonds link Cys-117-Cys-197, Cys-157-Cys-181, and Cys-159-Cys-164. His-142 serves as a coordination point for Zn(2+). Residue Glu-143 is part of the active site. Zn(2+) is bound by residues His-146 and His-152. Ca(2+) is bound by residues Cys-197 and Asn-200.

Belongs to the venom metalloproteinase (M12B) family. P-I subfamily. In terms of assembly, monomer. Zn(2+) serves as cofactor. As to expression, expressed by the venom gland.

Its subcellular location is the secreted. With respect to regulation, inhibited by EDTA, DTT and high concentrations of zinc ions (&gt;2 mM). Weakly inhibited by TLCK. Not inhibited by PMSF. Activated by calcium ions. Its function is as follows. Snake venom zinc metalloproteinase that acts on fibrinogen, fibrin, fibronectin (FN1), type I collagen, type IV collagen, integrin alpha-7/beta-1 (ITGA7/ITGB1) and integrin alpha-1/beta-1 (ITGA1/ITGB1). Binds to fibronectin (FN1), fibrinogen and, weakly, to type I collagen and laminin. Cleaves Xaa-Leu bonds. Inhibits ADP- and collagen-induced platelet aggregation both in the presence (IC(50)=1.4 uM for collagen) and in the absence (IC(50)=2.2 uM for collagen) of cofactors. Has hemorrhagic activity. This chain is Snake venom metalloproteinase atroxlysin-1, found in Bothrops atrox (Barba amarilla).